A 984-amino-acid chain; its full sequence is Shutoff protein (984 aa).

Residues 131–231 (GVAAESDPSD…DLERDALVAP (101 aa)) form a disordered region. The segment covering 137–147 (DPSDDEPDPEP) has biased composition (acidic residues). Over residues 148 to 159 (EYDHREADHDSD) the composition is skewed to basic and acidic residues. Residues 176–186 (VDEEPQDDSPS) are compositionally biased toward acidic residues. A compositionally biased stretch (polar residues) spans 190–202 (TASTVIEEAQTSA). The span at 205-216 (DSHDDDTHRDDG) shows a compositional bias: basic and acidic residues. The binding to host EIF4G stretch occupies residues 411-476 (LMETLLQPFA…AVRYTATLEL (66 aa)). The region spanning 479–597 (RVFREPSMVK…RLYSLPNPTA (119 aa)) is the RRM domain. 2 disordered regions span residues 810 to 853 (GVYK…GNRA) and 876 to 984 (KVGP…RQEE). At Y812 the chain carries Phosphotyrosine; by host. Over residues 913–923 (AGGRRFGRRNT) the composition is skewed to basic residues. The span at 945–958 (RGQQGEHPTTSPSA) shows a compositional bias: low complexity.

It belongs to the adenoviridae shutoff protein family. As to quaternary structure, monomer. Interacts with hexon protein; this interaction allows chaperoning and trimerization of hexon proteins. Interacts (via N-terminus) with host initiation factor EIF4G (via C-terminus). Interacts (via RRM domain) with viral mRNAs that contain the tripartite leader; this interaction allows ribosome shunting and expression of viral late mRNAs. In terms of processing, might be cleaved by the viral protease. Phosphorylated. Tyrosine phosphorylation enhances preferential binding to tripartite leader mRNAs and allows ribosome shunting. Post-translationally, methylated. Asymmetric dimethylation by host PRMT1 of the Arg/Gly-rich region may regulate shutoff protein binding to hexon and promote the capsid assembly in the nucleus.

It localises to the host cytoplasm. Functionally, protein that inhibits host translation while promoting late viral translation by ribosome shunting. Blocks host cap-dependent translation by binding to eIF4G, displacing MKNK1 from cap initiation complexes and preventing EIF4E phosphorylation. Binds to the tripartite leader sequence of viral late mRNAs and recruits host eIF4G, PABPC1/poly-A binding protein and 40S ribosomes subunits on viral mRNAs, allowing ribosome shunting and efficient translation of late viral mRNAs even though conventional translation via ribosome scanning from the cap has been shut off in the host cell. During assembly, acts as a chaperone protein that helps hexon proteins assembly into trimers. This Galliformes (FAdV-1) protein is Shutoff protein.